Consider the following 421-residue polypeptide: Serine hydroxymethyltransferase (421 aa).

(6S)-5,6,7,8-tetrahydrofolate contacts are provided by residues L120 and 124–126; that span reads GHL. The residue at position 229 (K229) is an N6-(pyridoxal phosphate)lysine. 354 to 356 is a binding site for (6S)-5,6,7,8-tetrahydrofolate; sequence SPF.

This sequence belongs to the SHMT family. In terms of assembly, homodimer. The cofactor is pyridoxal 5'-phosphate.

It is found in the cytoplasm. The catalysed reaction is (6R)-5,10-methylene-5,6,7,8-tetrahydrofolate + glycine + H2O = (6S)-5,6,7,8-tetrahydrofolate + L-serine. It participates in one-carbon metabolism; tetrahydrofolate interconversion. The protein operates within amino-acid biosynthesis; glycine biosynthesis; glycine from L-serine: step 1/1. Catalyzes the reversible interconversion of serine and glycine with tetrahydrofolate (THF) serving as the one-carbon carrier. This reaction serves as the major source of one-carbon groups required for the biosynthesis of purines, thymidylate, methionine, and other important biomolecules. Also exhibits THF-independent aldolase activity toward beta-hydroxyamino acids, producing glycine and aldehydes, via a retro-aldol mechanism. The polypeptide is Serine hydroxymethyltransferase (Opitutus terrae (strain DSM 11246 / JCM 15787 / PB90-1)).